The following is a 359-amino-acid chain: Phosphoserine aminotransferase (359 aa).

Residue R41 coordinates L-glutamate. Pyridoxal 5'-phosphate-binding positions include 75–76 (AS), W101, T152, D171, and Q194. K195 is subject to N6-(pyridoxal phosphate)lysine. 236–237 (NT) is a pyridoxal 5'-phosphate binding site.

Belongs to the class-V pyridoxal-phosphate-dependent aminotransferase family. SerC subfamily. In terms of assembly, homodimer. The cofactor is pyridoxal 5'-phosphate.

The protein resides in the cytoplasm. It catalyses the reaction O-phospho-L-serine + 2-oxoglutarate = 3-phosphooxypyruvate + L-glutamate. It carries out the reaction 4-(phosphooxy)-L-threonine + 2-oxoglutarate = (R)-3-hydroxy-2-oxo-4-phosphooxybutanoate + L-glutamate. The protein operates within amino-acid biosynthesis; L-serine biosynthesis; L-serine from 3-phospho-D-glycerate: step 2/3. Its pathway is cofactor biosynthesis; pyridoxine 5'-phosphate biosynthesis; pyridoxine 5'-phosphate from D-erythrose 4-phosphate: step 3/5. Catalyzes the reversible conversion of 3-phosphohydroxypyruvate to phosphoserine and of 3-hydroxy-2-oxo-4-phosphonooxybutanoate to phosphohydroxythreonine. The polypeptide is Phosphoserine aminotransferase (Acinetobacter baumannii (strain ACICU)).